A 116-amino-acid polypeptide reads, in one-letter code: Putative gamma-glutamylcyclotransferase PH0828 (116 aa).

13 to 16 (YGTL) is a substrate binding site. Glutamate 76 (proton acceptor) is an active-site residue.

The protein belongs to the gamma-glutamylcyclotransferase family.

Functionally, putative gamma-glutamylcyclotransferase. The chain is Putative gamma-glutamylcyclotransferase PH0828 from Pyrococcus horikoshii (strain ATCC 700860 / DSM 12428 / JCM 9974 / NBRC 100139 / OT-3).